We begin with the raw amino-acid sequence, 236 residues long: MTSKLINFITIEKERFEDECVKFIKNVITDSINSRNIATIGLSGGSTPKPIYEMLGNDSSIDWTKVYFFAVDERYIDKSSKDSIYDLISKSVFKNRENLLVDHFITPNTSLPLKECIETYSNDLKKLIEKSNGSPDLVTLGMGEDGHIASIFPNSPKSPLDETDLVYHTTTERFAIFDRITTNINFLASSKNKVFFMSGSSKKKVWDEMESSQINVSRWPAHKIISSGNTNVFYRE.

Belongs to the glucosamine/galactosamine-6-phosphate isomerase family. 6-phosphogluconolactonase subfamily.

It catalyses the reaction 6-phospho-D-glucono-1,5-lactone + H2O = 6-phospho-D-gluconate + H(+). Its pathway is carbohydrate degradation; pentose phosphate pathway; D-ribulose 5-phosphate from D-glucose 6-phosphate (oxidative stage): step 2/3. Hydrolysis of 6-phosphogluconolactone to 6-phosphogluconate. The sequence is that of Probable 6-phosphogluconolactonase (pgl) from Dictyostelium discoideum (Social amoeba).